The chain runs to 463 residues: Major capsid protein (463 aa).

Belongs to the NCLDV major capsid protein family. As to quaternary structure, homotrimer.

Its subcellular location is the virion. Major capsid protein that self assembles to form an icosahedral capsid. Represents around 50% of the total virion protein mass. This is Major capsid protein (MCP) from Rana tigrina ranavirus.